A 379-amino-acid chain; its full sequence is Homoserine O-acetyltransferase (379 aa).

One can recognise an AB hydrolase-1 domain in the interval 52-356 (NVVMVLHALT…IRGHDGFLVE (305 aa)). Residue S157 is the Nucleophile of the active site. R227 is a binding site for substrate. Active-site residues include D320 and H350. D351 contributes to the substrate binding site.

Belongs to the AB hydrolase superfamily. MetX family. As to quaternary structure, homodimer.

It is found in the cytoplasm. The catalysed reaction is L-homoserine + acetyl-CoA = O-acetyl-L-homoserine + CoA. Its pathway is amino-acid biosynthesis; L-methionine biosynthesis via de novo pathway; O-acetyl-L-homoserine from L-homoserine: step 1/1. In terms of biological role, transfers an acetyl group from acetyl-CoA to L-homoserine, forming acetyl-L-homoserine. The protein is Homoserine O-acetyltransferase of Mycobacterium marinum (strain ATCC BAA-535 / M).